We begin with the raw amino-acid sequence, 360 residues long: Peptide chain release factor 1 (360 aa).

The residue at position 237 (Gln237) is an N5-methylglutamine.

It belongs to the prokaryotic/mitochondrial release factor family. Post-translationally, methylated by PrmC. Methylation increases the termination efficiency of RF1.

The protein resides in the cytoplasm. Its function is as follows. Peptide chain release factor 1 directs the termination of translation in response to the peptide chain termination codons UAG and UAA. This Pseudomonas putida (strain ATCC 700007 / DSM 6899 / JCM 31910 / BCRC 17059 / LMG 24140 / F1) protein is Peptide chain release factor 1.